The primary structure comprises 564 residues: Proline--tRNA ligase (564 aa).

The protein belongs to the class-II aminoacyl-tRNA synthetase family. ProS type 1 subfamily. In terms of assembly, homodimer.

It is found in the cytoplasm. The enzyme catalyses tRNA(Pro) + L-proline + ATP = L-prolyl-tRNA(Pro) + AMP + diphosphate. Functionally, catalyzes the attachment of proline to tRNA(Pro) in a two-step reaction: proline is first activated by ATP to form Pro-AMP and then transferred to the acceptor end of tRNA(Pro). As ProRS can inadvertently accommodate and process non-cognate amino acids such as alanine and cysteine, to avoid such errors it has two additional distinct editing activities against alanine. One activity is designated as 'pretransfer' editing and involves the tRNA(Pro)-independent hydrolysis of activated Ala-AMP. The other activity is designated 'posttransfer' editing and involves deacylation of mischarged Ala-tRNA(Pro). The misacylated Cys-tRNA(Pro) is not edited by ProRS. This is Proline--tRNA ligase from Coxiella burnetii (strain Dugway 5J108-111).